Here is a 372-residue protein sequence, read N- to C-terminus: Serine protease inhibitor 42Dd (372 aa).

The first 15 residues, 1–15 (MYYLCIFLWVTSVAC), serve as a signal peptide directing secretion. N-linked (GlcNAc...) asparagine glycans are attached at residues Asn-197 and Asn-232.

The protein belongs to the serpin family. Expressed in the ovary.

It localises to the secreted. Its function is as follows. Serine protease inhibitor with activity toward trypsin. Involved in innate immunity to fungal infection by negatively regulating the Toll signaling pathway and suppressing the expression of the antifungal peptide drosomycin. Acts upstream of SPE and grass, and downstream of the fungal cell wall pattern recognition receptor GNBP3. May function specifically in the GNBP3-dependent beta-1,3-glucan branch of the Toll pathway. In Drosophila melanogaster (Fruit fly), this protein is Serine protease inhibitor 42Dd.